We begin with the raw amino-acid sequence, 591 residues long: L-fucose isomerase (591 aa).

Catalysis depends on proton acceptor residues glutamate 337 and aspartate 361. Mn(2+) is bound by residues glutamate 337, aspartate 361, and histidine 528.

It belongs to the L-fucose isomerase family. As to quaternary structure, homohexamer. Requires Mn(2+) as cofactor.

The protein localises to the cytoplasm. The catalysed reaction is L-fucose = L-fuculose. Its pathway is carbohydrate degradation; L-fucose degradation; L-lactaldehyde and glycerone phosphate from L-fucose: step 1/3. Functionally, converts the aldose L-fucose into the corresponding ketose L-fuculose. The protein is L-fucose isomerase of Salmonella paratyphi B (strain ATCC BAA-1250 / SPB7).